A 123-amino-acid chain; its full sequence is ATP synthase epsilon chain (123 aa).

It belongs to the ATPase epsilon chain family. F-type ATPases have 2 components, CF(1) - the catalytic core - and CF(0) - the membrane proton channel. CF(1) has five subunits: alpha(3), beta(3), gamma(1), delta(1), epsilon(1). CF(0) has three main subunits: a, b and c.

It is found in the cell inner membrane. Functionally, produces ATP from ADP in the presence of a proton gradient across the membrane. The protein is ATP synthase epsilon chain of Helicobacter pylori (strain HPAG1).